Consider the following 361-residue polypeptide: Pseudouridine-5'-phosphate glycosidase (361 aa).

Glutamate 27 (proton donor) is an active-site residue. 2 residues coordinate substrate: lysine 88 and valine 108. Mn(2+) is bound at residue aspartate 140. 142–144 is a substrate binding site; it reads SAD. Catalysis depends on lysine 161, which acts as the Nucleophile. The disordered stretch occupies residues 306–361; it reads DRSPTDPAAPDPTAPDPAAPDPTAPDPAAPDSAAPDLAGPDPSAPDPAAVARAHRP. The span at 312–333 shows a compositional bias: pro residues; that stretch reads PAAPDPTAPDPAAPDPTAPDPA. Over residues 334-354 the composition is skewed to low complexity; sequence APDSAAPDLAGPDPSAPDPAA.

It belongs to the pseudouridine-5'-phosphate glycosidase family. As to quaternary structure, homotrimer. Requires Mn(2+) as cofactor.

It carries out the reaction D-ribose 5-phosphate + uracil = psi-UMP + H2O. Functionally, catalyzes the reversible cleavage of pseudouridine 5'-phosphate (PsiMP) to ribose 5-phosphate and uracil. Functions biologically in the cleavage direction, as part of a pseudouridine degradation pathway. The protein is Pseudouridine-5'-phosphate glycosidase of Frankia alni (strain DSM 45986 / CECT 9034 / ACN14a).